The primary structure comprises 464 residues: Keratin, type I cytoskeletal 28 (464 aa).

The head stretch occupies residues 1–85 (MSLRFSSGSR…GSEGGLFSGN (85 aa)). The coil 1A stretch occupies residues 86-121 (EKVTMQNLNDRLASYLDNVRALEEANAELERKIKSW). The region spanning 86–401 (EKVTMQNLND…RLIDGDRNSC (316 aa)) is the IF rod domain. The linker 1 stretch occupies residues 122–143 (YEKHGPGSCHGLDHDYSRYHLT). The segment at 144–235 (IEDLKNKIIS…KNHEEEVKAL (92 aa)) is coil 1B. Residues 236–258 (QCVAGGNVNVEMNAAPGVDLTLL) are linker 12. A coil 2 region spans residues 259 to 397 (LNNMRAEYED…ETYCRLIDGD (139 aa)). Residues 398-464 (RNSCSKSKGF…NGKTKQRVPF (67 aa)) form a tail region. Over residues 402 to 417 (SKSKGFGSGSPGNSSK) the composition is skewed to low complexity. Disordered regions lie at residues 402-422 (SKSKGFGSGSPGNSSKDLSRT) and 440-464 (SSRVQSIEEKTSKMTNGKTKQRVPF).

Belongs to the intermediate filament family. Heterotetramer of two type I and two type II keratins.

Its subcellular location is the cytoplasm. Essential for the proper assembly of types I and II keratin protein complexes and the formation of keratin intermediate filaments in the inner root sheath (irs). The protein is Keratin, type I cytoskeletal 28 of Bos taurus (Bovine).